Reading from the N-terminus, the 472-residue chain is Methanethiol oxidase (472 aa).

At A2 the chain carries N-acetylalanine. S111 and S467 each carry phosphoserine.

The protein belongs to the selenium-binding protein family. Interacts with USP33. In terms of processing, the N-terminus is blocked. As to expression, present in liver and colon (at protein level).

The protein localises to the nucleus. Its subcellular location is the cytoplasm. The protein resides in the cytosol. It localises to the membrane. The enzyme catalyses methanethiol + O2 + H2O = hydrogen sulfide + formaldehyde + H2O2 + H(+). The protein operates within organosulfur degradation. Catalyzes the oxidation of methanethiol, an organosulfur compound known to be produced in substantial amounts by gut bacteria. Selenium-binding protein which may be involved in the sensing of reactive xenobiotics in the cytoplasm. May be involved in intra-Golgi protein transport. This Rattus norvegicus (Rat) protein is Methanethiol oxidase (Selenbp1).